The chain runs to 333 residues: Ornithine carbamoyltransferase (333 aa).

Carbamoyl phosphate contacts are provided by residues 56–59 (STRT), Arg107, and 134–137 (HPTQ). Residues Asn167, Asp231, and 235 to 236 (SM) contribute to the L-ornithine site. Residues 273-274 (CL) and Arg318 contribute to the carbamoyl phosphate site.

It belongs to the aspartate/ornithine carbamoyltransferase superfamily. OTCase family.

It localises to the cytoplasm. It catalyses the reaction carbamoyl phosphate + L-ornithine = L-citrulline + phosphate + H(+). The protein operates within amino-acid degradation; L-arginine degradation via ADI pathway; carbamoyl phosphate from L-arginine: step 2/2. Its function is as follows. Reversibly catalyzes the transfer of the carbamoyl group from carbamoyl phosphate (CP) to the N(epsilon) atom of ornithine (ORN) to produce L-citrulline. This chain is Ornithine carbamoyltransferase, found in Clostridium botulinum (strain 657 / Type Ba4).